Here is a 179-residue protein sequence, read N- to C-terminus: Large ribosomal subunit protein uL5 (179 aa).

Belongs to the universal ribosomal protein uL5 family. Part of the 50S ribosomal subunit; part of the 5S rRNA/L5/L18/L25 subcomplex. Contacts the 5S rRNA and the P site tRNA. Forms a bridge to the 30S subunit in the 70S ribosome.

This is one of the proteins that bind and probably mediate the attachment of the 5S RNA into the large ribosomal subunit, where it forms part of the central protuberance. In the 70S ribosome it contacts protein S13 of the 30S subunit (bridge B1b), connecting the 2 subunits; this bridge is implicated in subunit movement. Contacts the P site tRNA; the 5S rRNA and some of its associated proteins might help stabilize positioning of ribosome-bound tRNAs. The chain is Large ribosomal subunit protein uL5 from Alkaliphilus oremlandii (strain OhILAs) (Clostridium oremlandii (strain OhILAs)).